The sequence spans 937 residues: Protein translocase subunit SecA (937 aa).

ATP is bound by residues Gln90, 108 to 112 (GEGKT), and Asp509.

Belongs to the SecA family. In terms of assembly, monomer and homodimer. Part of the essential Sec protein translocation apparatus which comprises SecA, SecYEG and auxiliary proteins SecDF. Other proteins may also be involved.

The protein resides in the cell inner membrane. Its subcellular location is the cellular thylakoid membrane. It localises to the cytoplasm. The enzyme catalyses ATP + H2O + cellular proteinSide 1 = ADP + phosphate + cellular proteinSide 2.. In terms of biological role, part of the Sec protein translocase complex. Interacts with the SecYEG preprotein conducting channel. Has a central role in coupling the hydrolysis of ATP to the transfer of proteins into and across the cell membrane, serving as an ATP-driven molecular motor driving the stepwise translocation of polypeptide chains across the membrane. Probably participates in protein translocation into and across both the cytoplasmic and thylakoid membranes in cyanobacterial cells. In Parasynechococcus marenigrum (strain WH8102), this protein is Protein translocase subunit SecA.